Consider the following 311-residue polypeptide: Mediator of RNA polymerase II transcription subunit 27 (311 aa).

It belongs to the Mediator complex subunit 27 family. Component of the Mediator complex.

Its subcellular location is the nucleus. Functionally, component of the Mediator complex, a coactivator involved in the regulated transcription of nearly all RNA polymerase II-dependent genes. Mediator functions as a bridge to convey information from gene-specific regulatory proteins to the basal RNA polymerase II transcription machinery. Mediator is recruited to promoters by direct interactions with regulatory proteins and serves as a scaffold for the assembly of a functional preinitiation complex with RNA polymerase II and the general transcription factors. This is Mediator of RNA polymerase II transcription subunit 27 (med27) from Xenopus tropicalis (Western clawed frog).